A 219-amino-acid chain; its full sequence is 2-hydroxy-3-keto-5-methylthiopentenyl-1-phosphate phosphatase (219 aa).

It belongs to the HAD-like hydrolase superfamily. MtnX family.

It carries out the reaction 2-hydroxy-5-methylsulfanyl-3-oxopent-1-enyl phosphate + H2O = 1,2-dihydroxy-5-(methylsulfanyl)pent-1-en-3-one + phosphate. It participates in amino-acid biosynthesis; L-methionine biosynthesis via salvage pathway; L-methionine from S-methyl-5-thio-alpha-D-ribose 1-phosphate: step 4/6. Functionally, dephosphorylates 2-hydroxy-3-keto-5-methylthiopentenyl-1-phosphate (HK-MTPenyl-1-P) yielding 1,2-dihydroxy-3-keto-5-methylthiopentene (DHK-MTPene). The sequence is that of 2-hydroxy-3-keto-5-methylthiopentenyl-1-phosphate phosphatase from Bacillus cereus (strain AH187).